The primary structure comprises 35 residues: Apolipophorin-3 (35 aa).

In terms of assembly, equilibrium between a soluble monomer and a bound lipoprotein form. Apolipophorin-3 associates with lipophorin during lipid loading until each particle contains 9 or 14 molecules of apolipophorin-3. In terms of tissue distribution, hemolymph.

The protein localises to the secreted. Its function is as follows. Assists in the loading of diacylglycerol, generated from triacylglycerol stores in the fat body through the action of adipokinetic hormone, into lipophorin, the hemolymph lipoprotein. It increases the lipid carrying capacity of lipophorin by covering the expanding hydrophobic surface resulting from diacylglycerol uptake. It thus plays a critical role in the transport of lipids during flight in several species of insects. Has hemagglutinating activity towards rabbit erythrocytes. The protein is Apolipophorin-3 of Heliothis virescens (Tobacco budworm moth).